We begin with the raw amino-acid sequence, 72 residues long: Translation initiation factor IF-1 (72 aa).

The region spanning 1–72 (MAKEDAIELQ…SKGRIVFRAR (72 aa)) is the S1-like domain.

Belongs to the IF-1 family. In terms of assembly, component of the 30S ribosomal translation pre-initiation complex which assembles on the 30S ribosome in the order IF-2 and IF-3, IF-1 and N-formylmethionyl-tRNA(fMet); mRNA recruitment can occur at any time during PIC assembly.

The protein localises to the cytoplasm. In terms of biological role, one of the essential components for the initiation of protein synthesis. Stabilizes the binding of IF-2 and IF-3 on the 30S subunit to which N-formylmethionyl-tRNA(fMet) subsequently binds. Helps modulate mRNA selection, yielding the 30S pre-initiation complex (PIC). Upon addition of the 50S ribosomal subunit IF-1, IF-2 and IF-3 are released leaving the mature 70S translation initiation complex. The chain is Translation initiation factor IF-1 from Aliivibrio fischeri (strain ATCC 700601 / ES114) (Vibrio fischeri).